Here is an 80-residue protein sequence, read N- to C-terminus: Exodeoxyribonuclease 7 small subunit (80 aa).

This sequence belongs to the XseB family. In terms of assembly, heterooligomer composed of large and small subunits.

It is found in the cytoplasm. It carries out the reaction Exonucleolytic cleavage in either 5'- to 3'- or 3'- to 5'-direction to yield nucleoside 5'-phosphates.. Bidirectionally degrades single-stranded DNA into large acid-insoluble oligonucleotides, which are then degraded further into small acid-soluble oligonucleotides. This chain is Exodeoxyribonuclease 7 small subunit, found in Vibrio vulnificus (strain CMCP6).